Reading from the N-terminus, the 605-residue chain is Alpha-1,3-galactosidase A (605 aa).

Residues 1-20 (MKKYLHILPACFLFYAAAHA) form the signal peptide. PbH1 repeat units follow at residues 256–278 (SKNI…VSQY), 312–334 (KGKV…NVHG), 421–443 (TPEV…LVTT), 444–466 (PRKV…LIEA), 477–507 (VKDV…HPSN), and 517–547 (HQNI…LFRN).

This sequence belongs to the glycosyl hydrolase 110 family. A subfamily.

It carries out the reaction Hydrolysis of terminal, non-reducing branched (1-&gt;3)-alpha-D-galactosidic residues, producing free D-galactose.. It catalyses the reaction Hydrolysis of terminal, non-reducing alpha-D-galactose residues in alpha-D-galactosides, including galactose oligosaccharides, galactomannans and galactolipids.. In terms of biological role, alpha-galactosidase that specifically removes branched alpha-1,3-linked galactose residues present in blood group B antigens. Has no activity toward linear alpha-1,3-linked galactose residues. The polypeptide is Alpha-1,3-galactosidase A (glaA) (Bacteroides fragilis (strain ATCC 25285 / DSM 2151 / CCUG 4856 / JCM 11019 / LMG 10263 / NCTC 9343 / Onslow / VPI 2553 / EN-2)).